A 363-amino-acid polypeptide reads, in one-letter code: MIIDTTEVQAINSFSRLESSKEVYGLIWLFIPIFTPVSGITIGVLVIVWLEREISAGIQQRIGPEYAGPLGILQAIADGTKLLFKEDLLPSRGDIRLFSIGPSVVVISILLSHLVIPFGYRLVLADLSIGVSLWIAISSIAPIGLLMSGYASNNKYSFSGGLRAAAQSISYEIPLTLCVLSISLLSNSSSTVDIVEAQYKYGFWGWNLWRQPIGFLAFLISSLAECERLPFDLPEAEEELVAGYQTEYSGIKFGLFYLASYLNLLVSSLFVTVLYLGGWNLSIPYIAIPELFRINRIGGVFGTTISIFFTLAKAYLFLFIPITTRWTLPRMRMDQLLNLGWKFLLPIALGNLLLTTSSQLFSL.

The next 6 membrane-spanning stretches (helical) occupy residues 27–47 (IWLFIPIFTPVSGITIGVLVI), 98–118 (FSIGPSVVVISILLSHLVIPF), 127–147 (LSIGVSLWIAISSIAPIGLLM), 248–268 (YSGIKFGLFYLASYLNLLVSS), 300–320 (VFGTTISIFFTLAKAYLFLFI), and 336–356 (LLNLGWKFLLPIALGNLLLTT).

The protein belongs to the complex I subunit 1 family. NDH is composed of at least 16 different subunits, 5 of which are encoded in the nucleus.

It localises to the plastid. The protein localises to the chloroplast thylakoid membrane. It catalyses the reaction a plastoquinone + NADH + (n+1) H(+)(in) = a plastoquinol + NAD(+) + n H(+)(out). The catalysed reaction is a plastoquinone + NADPH + (n+1) H(+)(in) = a plastoquinol + NADP(+) + n H(+)(out). Its function is as follows. NDH shuttles electrons from NAD(P)H:plastoquinone, via FMN and iron-sulfur (Fe-S) centers, to quinones in the photosynthetic chain and possibly in a chloroplast respiratory chain. The immediate electron acceptor for the enzyme in this species is believed to be plastoquinone. Couples the redox reaction to proton translocation, and thus conserves the redox energy in a proton gradient. This is NAD(P)H-quinone oxidoreductase subunit 1, chloroplastic from Amborella trichopoda.